A 330-amino-acid chain; its full sequence is Phenylalanine--tRNA ligase alpha subunit (330 aa).

Glu254 lines the Mg(2+) pocket.

Belongs to the class-II aminoacyl-tRNA synthetase family. Phe-tRNA synthetase alpha subunit type 1 subfamily. As to quaternary structure, tetramer of two alpha and two beta subunits. The cofactor is Mg(2+).

Its subcellular location is the cytoplasm. It catalyses the reaction tRNA(Phe) + L-phenylalanine + ATP = L-phenylalanyl-tRNA(Phe) + AMP + diphosphate + H(+). In Neisseria meningitidis serogroup A / serotype 4A (strain DSM 15465 / Z2491), this protein is Phenylalanine--tRNA ligase alpha subunit (pheS).